The following is a 294-amino-acid chain: Elongation factor Ts (294 aa).

Residues 80-83 (TDFV) form an involved in Mg(2+) ion dislocation from EF-Tu region.

It belongs to the EF-Ts family.

The protein localises to the cytoplasm. In terms of biological role, associates with the EF-Tu.GDP complex and induces the exchange of GDP to GTP. It remains bound to the aminoacyl-tRNA.EF-Tu.GTP complex up to the GTP hydrolysis stage on the ribosome. In Listeria monocytogenes serotype 4b (strain CLIP80459), this protein is Elongation factor Ts.